A 356-amino-acid chain; its full sequence is Phosphoribosylformylglycinamidine cyclo-ligase (356 aa).

The protein belongs to the AIR synthase family.

It localises to the cytoplasm. It catalyses the reaction 2-formamido-N(1)-(5-O-phospho-beta-D-ribosyl)acetamidine + ATP = 5-amino-1-(5-phospho-beta-D-ribosyl)imidazole + ADP + phosphate + H(+). It functions in the pathway purine metabolism; IMP biosynthesis via de novo pathway; 5-amino-1-(5-phospho-D-ribosyl)imidazole from N(2)-formyl-N(1)-(5-phospho-D-ribosyl)glycinamide: step 2/2. In Sinorhizobium medicae (strain WSM419) (Ensifer medicae), this protein is Phosphoribosylformylglycinamidine cyclo-ligase.